We begin with the raw amino-acid sequence, 112 residues long: Putative pterin-4-alpha-carbinolamine dehydratase (112 aa).

Belongs to the pterin-4-alpha-carbinolamine dehydratase family.

It catalyses the reaction (4aS,6R)-4a-hydroxy-L-erythro-5,6,7,8-tetrahydrobiopterin = (6R)-L-erythro-6,7-dihydrobiopterin + H2O. This chain is Putative pterin-4-alpha-carbinolamine dehydratase, found in Shewanella oneidensis (strain ATCC 700550 / JCM 31522 / CIP 106686 / LMG 19005 / NCIMB 14063 / MR-1).